A 94-amino-acid polypeptide reads, in one-letter code: Small ribosomal subunit protein uS19m (94 aa).

It belongs to the universal ribosomal protein uS19 family.

It is found in the mitochondrion. This is Small ribosomal subunit protein uS19m (RPS19) from Petunia hybrida (Petunia).